Consider the following 506-residue polypeptide: Cobyric acid synthase (506 aa).

Positions 251-448 (DITIAIVQLP…LHGLFDSDAF (198 aa)) constitute a GATase cobBQ-type domain. Cys332 serves as the catalytic Nucleophile. His440 is a catalytic residue.

It belongs to the CobB/CobQ family. CobQ subfamily.

It participates in cofactor biosynthesis; adenosylcobalamin biosynthesis. Catalyzes amidations at positions B, D, E, and G on adenosylcobyrinic A,C-diamide. NH(2) groups are provided by glutamine, and one molecule of ATP is hydrogenolyzed for each amidation. In Salmonella dublin (strain CT_02021853), this protein is Cobyric acid synthase.